Consider the following 168-residue polypeptide: Ribosome maturation factor RimM (168 aa).

Residues 96 to 168 (KDEYYWGDLV…RIRVAWQKDW (73 aa)) form the PRC barrel domain.

It belongs to the RimM family. Binds ribosomal protein uS19.

The protein localises to the cytoplasm. An accessory protein needed during the final step in the assembly of 30S ribosomal subunit, possibly for assembly of the head region. Essential for efficient processing of 16S rRNA. May be needed both before and after RbfA during the maturation of 16S rRNA. It has affinity for free ribosomal 30S subunits but not for 70S ribosomes. The protein is Ribosome maturation factor RimM of Azoarcus sp. (strain BH72).